Reading from the N-terminus, the 482-residue chain is NADH-quinone oxidoreductase subunit D (482 aa).

Residues 1-16 (MTTNTSTSSTTDDLTT) are compositionally biased toward low complexity. The disordered stretch occupies residues 1 to 48 (MTTNTSTSSTTDDLTTGAPNGTGAPDGANGVGGPTGTVGGPGEHPAYE). A compositionally biased stretch (gly residues) spans 29-42 (NGVGGPTGTVGGPG).

It belongs to the complex I 49 kDa subunit family. NDH-1 is composed of 14 different subunits. Subunits NuoB, C, D, E, F, and G constitute the peripheral sector of the complex.

Its subcellular location is the cell membrane. The catalysed reaction is a quinone + NADH + 5 H(+)(in) = a quinol + NAD(+) + 4 H(+)(out). NDH-1 shuttles electrons from NADH, via FMN and iron-sulfur (Fe-S) centers, to quinones in the respiratory chain. The immediate electron acceptor for the enzyme in this species is believed to be a menaquinone. Couples the redox reaction to proton translocation (for every two electrons transferred, four hydrogen ions are translocated across the cytoplasmic membrane), and thus conserves the redox energy in a proton gradient. The chain is NADH-quinone oxidoreductase subunit D from Frankia casuarinae (strain DSM 45818 / CECT 9043 / HFP020203 / CcI3).